A 596-amino-acid polypeptide reads, in one-letter code: Elongation factor 4 (596 aa).

A tr-type G domain is found at K2–D183. GTP contacts are provided by residues D14–T19 and N130–D133.

This sequence belongs to the TRAFAC class translation factor GTPase superfamily. Classic translation factor GTPase family. LepA subfamily.

Its subcellular location is the cell inner membrane. It carries out the reaction GTP + H2O = GDP + phosphate + H(+). Required for accurate and efficient protein synthesis under certain stress conditions. May act as a fidelity factor of the translation reaction, by catalyzing a one-codon backward translocation of tRNAs on improperly translocated ribosomes. Back-translocation proceeds from a post-translocation (POST) complex to a pre-translocation (PRE) complex, thus giving elongation factor G a second chance to translocate the tRNAs correctly. Binds to ribosomes in a GTP-dependent manner. The polypeptide is Elongation factor 4 (Campylobacter curvus (strain 525.92)).